A 338-amino-acid chain; its full sequence is Glycerol-3-phosphate dehydrogenase [NAD(P)+] (338 aa).

NADPH is bound by residues S13, W14, and K108. Residues K108, G139, and S141 each contribute to the sn-glycerol 3-phosphate site. A143 contacts NADPH. Sn-glycerol 3-phosphate contacts are provided by K194, D247, S257, R258, and N259. The Proton acceptor role is filled by K194. NADPH is bound at residue R258. NADPH contacts are provided by V282 and E284.

Belongs to the NAD-dependent glycerol-3-phosphate dehydrogenase family.

The protein localises to the cytoplasm. It carries out the reaction sn-glycerol 3-phosphate + NAD(+) = dihydroxyacetone phosphate + NADH + H(+). The enzyme catalyses sn-glycerol 3-phosphate + NADP(+) = dihydroxyacetone phosphate + NADPH + H(+). The protein operates within membrane lipid metabolism; glycerophospholipid metabolism. Catalyzes the reduction of the glycolytic intermediate dihydroxyacetone phosphate (DHAP) to sn-glycerol 3-phosphate (G3P), the key precursor for phospholipid synthesis. This chain is Glycerol-3-phosphate dehydrogenase [NAD(P)+], found in Streptococcus pyogenes serotype M28 (strain MGAS6180).